Reading from the N-terminus, the 37-residue chain is uncharacterized protein (37 aa).

This is an uncharacterized protein from Archaeoglobus fulgidus (strain ATCC 49558 / DSM 4304 / JCM 9628 / NBRC 100126 / VC-16).